Reading from the N-terminus, the 257-residue chain is Ditrans,polycis-undecaprenyl-diphosphate synthase ((2E,6E)-farnesyl-diphosphate specific) (257 aa).

The active site involves aspartate 24. Aspartate 24 lines the Mg(2+) pocket. Substrate is bound by residues 25 to 28 (GNGR), tryptophan 29, arginine 37, histidine 41, and 69 to 71 (SSE). Residue asparagine 72 is the Proton acceptor of the active site. Residues tryptophan 73, arginine 75, arginine 192, and 198 to 200 (RIS) contribute to the substrate site. Residue glutamate 211 participates in Mg(2+) binding.

This sequence belongs to the UPP synthase family. Homodimer. Mg(2+) is required as a cofactor.

It catalyses the reaction 8 isopentenyl diphosphate + (2E,6E)-farnesyl diphosphate = di-trans,octa-cis-undecaprenyl diphosphate + 8 diphosphate. Its function is as follows. Catalyzes the sequential condensation of isopentenyl diphosphate (IPP) with (2E,6E)-farnesyl diphosphate (E,E-FPP) to yield (2Z,6Z,10Z,14Z,18Z,22Z,26Z,30Z,34E,38E)-undecaprenyl diphosphate (di-trans,octa-cis-UPP). UPP is the precursor of glycosyl carrier lipid in the biosynthesis of bacterial cell wall polysaccharide components such as peptidoglycan and lipopolysaccharide. This Aliivibrio fischeri (strain ATCC 700601 / ES114) (Vibrio fischeri) protein is Ditrans,polycis-undecaprenyl-diphosphate synthase ((2E,6E)-farnesyl-diphosphate specific).